The sequence spans 278 residues: Indole-3-glycerol phosphate synthase (278 aa).

Belongs to the TrpC family.

It catalyses the reaction 1-(2-carboxyphenylamino)-1-deoxy-D-ribulose 5-phosphate + H(+) = (1S,2R)-1-C-(indol-3-yl)glycerol 3-phosphate + CO2 + H2O. Its pathway is amino-acid biosynthesis; L-tryptophan biosynthesis; L-tryptophan from chorismate: step 4/5. This is Indole-3-glycerol phosphate synthase from Pseudomonas paraeruginosa (strain DSM 24068 / PA7) (Pseudomonas aeruginosa (strain PA7)).